Reading from the N-terminus, the 158-residue chain is NAD(P)H-quinone oxidoreductase subunit J, chloroplastic (158 aa).

This sequence belongs to the complex I 30 kDa subunit family. NDH is composed of at least 16 different subunits, 5 of which are encoded in the nucleus.

It localises to the plastid. The protein localises to the chloroplast thylakoid membrane. The catalysed reaction is a plastoquinone + NADH + (n+1) H(+)(in) = a plastoquinol + NAD(+) + n H(+)(out). It catalyses the reaction a plastoquinone + NADPH + (n+1) H(+)(in) = a plastoquinol + NADP(+) + n H(+)(out). Its function is as follows. NDH shuttles electrons from NAD(P)H:plastoquinone, via FMN and iron-sulfur (Fe-S) centers, to quinones in the photosynthetic chain and possibly in a chloroplast respiratory chain. The immediate electron acceptor for the enzyme in this species is believed to be plastoquinone. Couples the redox reaction to proton translocation, and thus conserves the redox energy in a proton gradient. The polypeptide is NAD(P)H-quinone oxidoreductase subunit J, chloroplastic (Vitis vinifera (Grape)).